Here is a 238-residue protein sequence, read N- to C-terminus: NADH-quinone oxidoreductase subunit C (238 aa).

A disordered region spans residues 1-20 (MSSPDQNPSDAAGQTGSSNE).

The protein belongs to the complex I 30 kDa subunit family. NDH-1 is composed of 14 different subunits. Subunits NuoB, C, D, E, F, and G constitute the peripheral sector of the complex.

The protein localises to the cell membrane. The enzyme catalyses a quinone + NADH + 5 H(+)(in) = a quinol + NAD(+) + 4 H(+)(out). In terms of biological role, NDH-1 shuttles electrons from NADH, via FMN and iron-sulfur (Fe-S) centers, to quinones in the respiratory chain. The immediate electron acceptor for the enzyme in this species is believed to be a menaquinone. Couples the redox reaction to proton translocation (for every two electrons transferred, four hydrogen ions are translocated across the cytoplasmic membrane), and thus conserves the redox energy in a proton gradient. This chain is NADH-quinone oxidoreductase subunit C, found in Mycobacterium marinum (strain ATCC BAA-535 / M).